A 127-amino-acid polypeptide reads, in one-letter code: Protein ApaG (127 aa).

The 125-residue stretch at 3–127 folds into the ApaG domain; the sequence is DADVYAISVE…FVLAIPRTLH (125 aa).

The protein is Protein ApaG of Stenotrophomonas maltophilia (strain K279a).